A 373-amino-acid chain; its full sequence is Muconate cycloisomerase 1 (373 aa).

Lys169 is a catalytic residue. The active-site Proton acceptor is Lys169. The Mn(2+) site is built by Asp198, Glu224, and Asp249. Glu327 functions as the Proton donor in the catalytic mechanism.

This sequence belongs to the mandelate racemase/muconate lactonizing enzyme family. Mn(2+) serves as cofactor.

The enzyme catalyses (S)-muconolactone = cis,cis-muconate + H(+). In Rhodococcus opacus (Nocardia opaca), this protein is Muconate cycloisomerase 1 (catB).